We begin with the raw amino-acid sequence, 141 residues long: Large ribosomal subunit protein uL11 (141 aa).

It belongs to the universal ribosomal protein uL11 family. Part of the ribosomal stalk of the 50S ribosomal subunit. Interacts with L10 and the large rRNA to form the base of the stalk. L10 forms an elongated spine to which L12 dimers bind in a sequential fashion forming a multimeric L10(L12)X complex. Post-translationally, one or more lysine residues are methylated.

In terms of biological role, forms part of the ribosomal stalk which helps the ribosome interact with GTP-bound translation factors. This chain is Large ribosomal subunit protein uL11, found in Levilactobacillus brevis (strain ATCC 367 / BCRC 12310 / CIP 105137 / JCM 1170 / LMG 11437 / NCIMB 947 / NCTC 947) (Lactobacillus brevis).